Consider the following 255-residue polypeptide: Flap endonuclease Xni (255 aa).

Asp-105 is a binding site for Mg(2+). The 91-residue stretch at 163 to 253 folds into the 5'-3' exonuclease domain; it reads QYQMLDFIAL…NLKQFRINPI (91 aa). The K(+) site is built by Leu-172, Ala-173, Pro-181, Ile-183, and Ile-186. Residues 185–190 are interaction with DNA; sequence GIGPKS.

Belongs to the Xni family. Mg(2+) serves as cofactor. K(+) is required as a cofactor.

Its function is as follows. Has flap endonuclease activity. During DNA replication, flap endonucleases cleave the 5'-overhanging flap structure that is generated by displacement synthesis when DNA polymerase encounters the 5'-end of a downstream Okazaki fragment. In Shewanella frigidimarina (strain NCIMB 400), this protein is Flap endonuclease Xni.